The primary structure comprises 400 residues: S-adenosylmethionine synthase (400 aa).

136–141 (GQGSVD) lines the ATP pocket.

The protein belongs to the AdoMet synthase 2 family. The cofactor is Mg(2+).

It carries out the reaction L-methionine + ATP + H2O = S-adenosyl-L-methionine + phosphate + diphosphate. It participates in amino-acid biosynthesis; S-adenosyl-L-methionine biosynthesis; S-adenosyl-L-methionine from L-methionine: step 1/1. Functionally, catalyzes the formation of S-adenosylmethionine from methionine and ATP. This Thermoplasma acidophilum (strain ATCC 25905 / DSM 1728 / JCM 9062 / NBRC 15155 / AMRC-C165) protein is S-adenosylmethionine synthase (mat).